Consider the following 572-residue polypeptide: MRTSQYLFSTLKETPNDAQVVSHQLMLRAGMIRPMASGLYNWLPTGIRVLKKVEKIIREEMNKGGAIEVLMPVVQPAELWEESGRWDQYGPELLRFEDRGNRNFVLGPTHEEVITDLVRREVSSYKQLPLNLYQIQTKFRDEVRPRFGVMRSREFIMKDAYSFHTTQESLQATYDVMYQVYSNIFNRLGLDFRAVQADTGSIGGSASHEFQVLASSGEDDVVFSTESDFAANIELAEAIAIGERQAPTAEMCLVDTPNAKTIAELVEQFNLPIEKTVKTLIVKGADENQPLVALIIRGDHELNEIKAQKHPLVADPLEFADETEIKAKIGAGVGSLGAVNLNIPAIIDRTVALMSDFSCGANIDGKHYFNVNWVRDVAMPEVFDLRNVVEGDPSPDGKGTLQIKRGIEVGHIFQLGKKYSEAMKATVQGEDGKPLVMTMGCYGIGVTRVVASAIEQHHDERGIIWPSDEIAPFTVAIVPMNMHKSEAVQKYAEELYRTLQSQGVDVIFDDRKERPGVMFADMELIGIPHMVVIGEKNLDNGEIEYKNRRTGEKEMISKDKLLSVLNEKLGNL.

Belongs to the class-II aminoacyl-tRNA synthetase family. ProS type 1 subfamily. Homodimer.

It localises to the cytoplasm. It catalyses the reaction tRNA(Pro) + L-proline + ATP = L-prolyl-tRNA(Pro) + AMP + diphosphate. Functionally, catalyzes the attachment of proline to tRNA(Pro) in a two-step reaction: proline is first activated by ATP to form Pro-AMP and then transferred to the acceptor end of tRNA(Pro). As ProRS can inadvertently accommodate and process non-cognate amino acids such as alanine and cysteine, to avoid such errors it has two additional distinct editing activities against alanine. One activity is designated as 'pretransfer' editing and involves the tRNA(Pro)-independent hydrolysis of activated Ala-AMP. The other activity is designated 'posttransfer' editing and involves deacylation of mischarged Ala-tRNA(Pro). The misacylated Cys-tRNA(Pro) is not edited by ProRS. This Haemophilus influenzae (strain PittGG) protein is Proline--tRNA ligase.